Consider the following 193-residue polypeptide: Ancillary SecYEG translocon subunit (193 aa).

Over Met1–Asn8 the chain is Cytoplasmic. Residues Ile9 to Phe29 form a helical membrane-spanning segment. The Periplasmic segment spans residues Ser30–Asn193.

It belongs to the YfgM family. Interacts with the SecYEG translocon. Forms a complex with PpiD.

Its subcellular location is the cell inner membrane. Its function is as follows. May mediate protein transfer from the SecYEG translocon to the periplasmic chaperone network via its periplasmic C-terminal region. This is Ancillary SecYEG translocon subunit from Buchnera aphidicola subsp. Acyrthosiphon pisum (strain APS) (Acyrthosiphon pisum symbiotic bacterium).